A 544-amino-acid polypeptide reads, in one-letter code: CTP synthase (544 aa).

The segment at 1-266 (MSTKFIFVTG…DYFVCRRFHL (266 aa)) is amidoligase domain. A CTP-binding site is contributed by serine 14. Residue serine 14 participates in UTP binding. ATP-binding positions include 15 to 20 (SLGKGI) and aspartate 72. Residues aspartate 72 and glutamate 140 each coordinate Mg(2+). CTP-binding positions include 147–149 (DIE), 187–192 (KTKPTQ), and lysine 223. Residues 187–192 (KTKPTQ) and lysine 223 each bind UTP. The Glutamine amidotransferase type-1 domain maps to 291-542 (TIGMVGKYIE…VAAAHIHQKA (252 aa)). Residue glycine 352 coordinates L-glutamine. Residue cysteine 379 is the Nucleophile; for glutamine hydrolysis of the active site. Residues 380–383 (LGMQ), glutamate 403, and arginine 470 contribute to the L-glutamine site. Catalysis depends on residues histidine 515 and glutamate 517.

The protein belongs to the CTP synthase family. As to quaternary structure, homotetramer.

It carries out the reaction UTP + L-glutamine + ATP + H2O = CTP + L-glutamate + ADP + phosphate + 2 H(+). The enzyme catalyses L-glutamine + H2O = L-glutamate + NH4(+). The catalysed reaction is UTP + NH4(+) + ATP = CTP + ADP + phosphate + 2 H(+). The protein operates within pyrimidine metabolism; CTP biosynthesis via de novo pathway; CTP from UDP: step 2/2. Its activity is regulated as follows. Allosterically activated by GTP, when glutamine is the substrate; GTP has no effect on the reaction when ammonia is the substrate. The allosteric effector GTP functions by stabilizing the protein conformation that binds the tetrahedral intermediate(s) formed during glutamine hydrolysis. Inhibited by the product CTP, via allosteric rather than competitive inhibition. Catalyzes the ATP-dependent amination of UTP to CTP with either L-glutamine or ammonia as the source of nitrogen. Regulates intracellular CTP levels through interactions with the four ribonucleotide triphosphates. The chain is CTP synthase from Pseudoalteromonas translucida (strain TAC 125).